The chain runs to 420 residues: D-tagatose-1,6-bisphosphate aldolase subunit GatZ (420 aa).

Belongs to the GatZ/KbaZ family. GatZ subfamily. Forms a complex with GatY.

Its pathway is carbohydrate metabolism; D-tagatose 6-phosphate degradation; D-glyceraldehyde 3-phosphate and glycerone phosphate from D-tagatose 6-phosphate: step 2/2. Functionally, component of the tagatose-1,6-bisphosphate aldolase GatYZ that is required for full activity and stability of the Y subunit. Could have a chaperone-like function for the proper and stable folding of GatY. When expressed alone, GatZ does not show any aldolase activity. Is involved in the catabolism of galactitol. This chain is D-tagatose-1,6-bisphosphate aldolase subunit GatZ, found in Escherichia coli (strain SMS-3-5 / SECEC).